A 535-amino-acid chain; its full sequence is Bifunctional purine biosynthesis protein PurH (535 aa).

In terms of domain architecture, MGS-like spans 6–151 (TRLPIRRALI…KNHKDVAIVV (146 aa)).

The protein belongs to the PurH family.

The catalysed reaction is (6R)-10-formyltetrahydrofolate + 5-amino-1-(5-phospho-beta-D-ribosyl)imidazole-4-carboxamide = 5-formamido-1-(5-phospho-D-ribosyl)imidazole-4-carboxamide + (6S)-5,6,7,8-tetrahydrofolate. The enzyme catalyses IMP + H2O = 5-formamido-1-(5-phospho-D-ribosyl)imidazole-4-carboxamide. Its pathway is purine metabolism; IMP biosynthesis via de novo pathway; 5-formamido-1-(5-phospho-D-ribosyl)imidazole-4-carboxamide from 5-amino-1-(5-phospho-D-ribosyl)imidazole-4-carboxamide (10-formyl THF route): step 1/1. It participates in purine metabolism; IMP biosynthesis via de novo pathway; IMP from 5-formamido-1-(5-phospho-D-ribosyl)imidazole-4-carboxamide: step 1/1. The protein is Bifunctional purine biosynthesis protein PurH of Pseudomonas fluorescens (strain SBW25).